The primary structure comprises 151 residues: MHKIPKGTALAFDFGEARIGVAQGDAELGLSHPLSTVTGGSNDEKFAAIAKLVQEWQPRYFVVGLPVHTDGTKHEMTHLSRKFGRRLNGRFNLPVYWVDERLSSVYAESLLSEAQVFGKKRKSVLDQVAAQAILHGFFEGGPAECFNGREG.

Belongs to the YqgF nuclease family.

It localises to the cytoplasm. Functionally, could be a nuclease involved in processing of the 5'-end of pre-16S rRNA. This is Putative pre-16S rRNA nuclease from Neisseria meningitidis serogroup B (strain ATCC BAA-335 / MC58).